Consider the following 415-residue polypeptide: Gamma-glutamyl phosphate reductase (415 aa).

This sequence belongs to the gamma-glutamyl phosphate reductase family.

Its subcellular location is the cytoplasm. The catalysed reaction is L-glutamate 5-semialdehyde + phosphate + NADP(+) = L-glutamyl 5-phosphate + NADPH + H(+). It participates in amino-acid biosynthesis; L-proline biosynthesis; L-glutamate 5-semialdehyde from L-glutamate: step 2/2. Catalyzes the NADPH-dependent reduction of L-glutamate 5-phosphate into L-glutamate 5-semialdehyde and phosphate. The product spontaneously undergoes cyclization to form 1-pyrroline-5-carboxylate. This Shouchella clausii (strain KSM-K16) (Alkalihalobacillus clausii) protein is Gamma-glutamyl phosphate reductase.